The primary structure comprises 404 residues: Interferon-activable protein 205-A (404 aa).

A Pyrin domain is found at 1 to 88 (MENEYKRLVL…AEILKKERSE (88 aa)). The disordered stretch occupies residues 85 to 198 (ERSEVTEETS…KSQPQNQNIP (114 aa)). 2 stretches are compositionally biased toward low complexity: residues 102–112 (ASPATPTSTTS) and 122–132 (TSTTQEETSTA). Residues 137–147 (GMSEEKTDVKK) show a composition bias toward basic and acidic residues. Residues 168 to 185 (QSPISQVSSSASSNIPSA) show a composition bias toward low complexity. The span at 186–197 (KNQKSQPQNQNI) shows a compositional bias: polar residues. One can recognise an HIN-200 domain in the interval 192–392 (PQNQNIPRGA…CGDHSFVKVT (201 aa)).

Belongs to the HIN-200 family.

It is found in the nucleus. May act as a transcriptional regulator in the myeloid lineage. Inhibits cell growth via p53/TP53 and RB1-dependent and independent pathways. This Mus musculus (Mouse) protein is Interferon-activable protein 205-A (Ifi205a).